The chain runs to 244 residues: MPRPSPCADSGGGMMTTLTARPEAITFDPQQTALIVVDMQNAYATPGGYLDLAGFDVSTTRPVIANIQTAVTAARTAGMLIIWFQNGWDEQYVEAGGPGSPNYHKSNALKTMRNQPLLQGKLLAKGSWDYQLVDELVPQPGDIVLPKPRYSGFFNTPLDSILRSRGIRHLVFTGIATNVCVESTLRDGFFLEYFGVVLEDATHQAGPEFAQKAALFNIETFFGWVSDVETFCDALSSTSFARIA.

Residue Asp38 is the Proton acceptor of the active site. Lys147 is an active-site residue. Cys180 functions as the Nucleophile in the catalytic mechanism.

Belongs to the isochorismatase family. RutB subfamily.

It catalyses the reaction (Z)-3-ureidoacrylate + H2O + H(+) = (Z)-3-aminoacrylate + NH4(+) + CO2. The catalysed reaction is (Z)-3-ureidoacrylate + H2O = (Z)-3-aminoacrylate + carbamate + H(+). The enzyme catalyses (Z)-2-methylureidoacrylate + H2O + H(+) = (Z)-2-methylaminoacrylate + NH4(+) + CO2. In terms of biological role, hydrolyzes ureidoacrylate to form aminoacrylate and carbamate. The carbamate hydrolyzes spontaneously, thereby releasing one of the nitrogen atoms of the pyrimidine ring as ammonia and one of its carbon atoms as CO2. The protein is Ureidoacrylate amidohydrolase RutB of Escherichia coli O1:K1 / APEC.